A 265-amino-acid polypeptide reads, in one-letter code: Glutamate racemase (265 aa).

Substrate contacts are provided by residues 10 to 11 and 42 to 43; these read DS and YG. Residue Cys73 is the Proton donor/acceptor of the active site. 74-75 lines the substrate pocket; sequence NT. Residue Cys183 is the Proton donor/acceptor of the active site. Residue 184–185 participates in substrate binding; that stretch reads TH.

Belongs to the aspartate/glutamate racemases family.

The enzyme catalyses L-glutamate = D-glutamate. It functions in the pathway cell wall biogenesis; peptidoglycan biosynthesis. Functionally, provides the (R)-glutamate required for cell wall biosynthesis. The chain is Glutamate racemase from Corynebacterium diphtheriae (strain ATCC 700971 / NCTC 13129 / Biotype gravis).